Here is a 256-residue protein sequence, read N- to C-terminus: Cell division protein ZipA (256 aa).

Residues Met1 to Gln6 lie on the Periplasmic side of the membrane. The helical transmembrane segment at Ile7–Ser27 threads the bilayer. The Cytoplasmic portion of the chain corresponds to Tyr28–Thr256.

It belongs to the ZipA family. In terms of assembly, interacts with FtsZ via their C-terminal domains.

The protein resides in the cell inner membrane. Essential cell division protein that stabilizes the FtsZ protofilaments by cross-linking them and that serves as a cytoplasmic membrane anchor for the Z ring. Also required for the recruitment to the septal ring of downstream cell division proteins. This chain is Cell division protein ZipA, found in Baumannia cicadellinicola subsp. Homalodisca coagulata.